Consider the following 957-residue polypeptide: Kinesin heavy chain isoform 5C (957 aa).

Positions 8 to 327 constitute a Kinesin motor domain; that stretch reads SIKVMCRFRP…LMFGQRAKTI (320 aa). ATP contacts are provided by Gln87, Ser89, Ser90, Gly91, Lys92, Thr93, His94, and Lys99. Positions 174–315 are microtubule-binding; that stretch reads VSSPEEVMDV…PSVFNEAETK (142 aa). The stretch at 406-923 forms a coiled coil; the sequence is VAGISTEEKE…ARRAHSAQIA (518 aa). Residues 859–956 are globular; that stretch reads RCELPKLEKR…GSSSNSTHYQ (98 aa). The tract at residues 911–957 is disordered; sequence KNMARRAHSAQIAKPIRPGHYPASSPTAVHAIRGGGGSSSNSTHYQK.

Belongs to the TRAFAC class myosin-kinesin ATPase superfamily. Kinesin family. Kinesin subfamily. Oligomer composed of two heavy chains and two light chains. Interacts with GRIP1 and KLC3. Interacts with TRAK1. Interacts with ZFYVE27. Highest expression in brain, prostate and testis, and moderate expression in kidney, small intestine and ovary.

It is found in the cytoplasm. Its subcellular location is the cytoskeleton. The protein resides in the cell projection. The protein localises to the dendrite. It catalyses the reaction ATP + H2O = ADP + phosphate + H(+). Functionally, microtubule-associated force-producing protein that may play a role in organelle transport. Has ATPase activity. Involved in synaptic transmission. Mediates dendritic trafficking of mRNAs. Required for anterograde axonal transportation of MAPK8IP3/JIP3 which is essential for MAPK8IP3/JIP3 function in axon elongation. This Homo sapiens (Human) protein is Kinesin heavy chain isoform 5C (KIF5C).